A 363-amino-acid chain; its full sequence is Flagellar P-ring protein (363 aa).

A signal peptide spans 1–21 (MKTVINIFILFTFLASLSANA).

This sequence belongs to the FlgI family. As to quaternary structure, the basal body constitutes a major portion of the flagellar organelle and consists of four rings (L,P,S, and M) mounted on a central rod.

Its subcellular location is the periplasm. It localises to the bacterial flagellum basal body. Its function is as follows. Assembles around the rod to form the L-ring and probably protects the motor/basal body from shearing forces during rotation. This chain is Flagellar P-ring protein, found in Colwellia psychrerythraea (strain 34H / ATCC BAA-681) (Vibrio psychroerythus).